A 283-amino-acid polypeptide reads, in one-letter code: Phosphatidylglycerol--prolipoprotein diacylglyceryl transferase (283 aa).

The next 4 membrane-spanning stretches (helical) occupy residues 20 to 40 (IGGF…IIGL), 60 to 80 (LVIW…VAFE), 94 to 114 (IWQG…AILV), and 121 to 141 (LSFW…QAIG). An a 1,2-diacyl-sn-glycero-3-phospho-(1'-sn-glycerol)-binding site is contributed by arginine 142. The next 3 membrane-spanning stretches (helical) occupy residues 183–203 (FLYE…LFFY), 214–234 (GTIT…IEGL), and 248–268 (QVVS…LYLL).

The protein belongs to the Lgt family.

It localises to the cell inner membrane. The enzyme catalyses L-cysteinyl-[prolipoprotein] + a 1,2-diacyl-sn-glycero-3-phospho-(1'-sn-glycerol) = an S-1,2-diacyl-sn-glyceryl-L-cysteinyl-[prolipoprotein] + sn-glycerol 1-phosphate + H(+). It functions in the pathway protein modification; lipoprotein biosynthesis (diacylglyceryl transfer). Its function is as follows. Catalyzes the transfer of the diacylglyceryl group from phosphatidylglycerol to the sulfhydryl group of the N-terminal cysteine of a prolipoprotein, the first step in the formation of mature lipoproteins. The protein is Phosphatidylglycerol--prolipoprotein diacylglyceryl transferase of Synechocystis sp. (strain ATCC 27184 / PCC 6803 / Kazusa).